Here is a 733-residue protein sequence, read N- to C-terminus: Ribosomal protein S6 kinase alpha-2 (733 aa).

The Protein kinase 1 domain maps to 59–318 (FELLKVLGQG…VEEIKRHPFF (260 aa)). ATP contacts are provided by residues 65-73 (LGQGSYGKV) and Lys-91. The active-site Proton acceptor is the Asp-184. Ser-218 carries the post-translational modification Phosphoserine; by PDPK1. An AGC-kinase C-terminal domain is found at 319 to 388 (VTIDWNKLYR…VASSLVQEPS (70 aa)). Position 377 is a phosphoserine (Ser-377). The region spanning 415–672 (YEIKEDIGVG…AVQVLKHPWI (258 aa)) is the Protein kinase 2 domain. Residues 421 to 429 (IGVGSYSVC) and Lys-444 contribute to the ATP site. The active-site Proton acceptor is Asp-532.

The protein belongs to the protein kinase superfamily. AGC Ser/Thr protein kinase family. S6 kinase subfamily. In terms of assembly, forms a complex with either MAPK1/ERK2 or MAPK3/ERK1 in quiescent cells. Transiently dissociates following mitogenic stimulation. Interacts with FBXO5; cooperate to induce the metaphase arrest of early blastomeres; increases and stabilizes interaction of FBXO5 with CDC20. The cofactor is Mg(2+). Activated by phosphorylation at Ser-218 by PDPK1. Autophosphorylated on Ser-377, as part of the activation process. May be phosphorylated at Thr-356 and Ser-360 by MAPK1/ERK2 and MAPK3/ERK1. Post-translationally, N-terminal myristoylation results in an activated kinase in the absence of added growth factors.

The protein localises to the nucleus. It localises to the cytoplasm. The catalysed reaction is L-seryl-[protein] + ATP = O-phospho-L-seryl-[protein] + ADP + H(+). The enzyme catalyses L-threonyl-[protein] + ATP = O-phospho-L-threonyl-[protein] + ADP + H(+). Upon extracellular signal or mitogen stimulation, phosphorylated at Thr-570 in the C-terminal kinase domain (CTKD) by MAPK1/ERK2 and MAPK3/ERK1. The activated CTKD then autophosphorylates Ser-377, allowing binding of PDPK1, which in turn phosphorylates Ser-218 in the N-terminal kinase domain (NTDK) leading to the full activation of the protein and subsequent phosphorylation of the substrates by the NTKD. Its function is as follows. Serine/threonine-protein kinase that acts downstream of ERK (MAPK1/ERK2 and MAPK3/ERK1) signaling and mediates mitogenic and stress-induced activation of transcription factors, regulates translation, and mediates cellular proliferation, survival, and differentiation. May function as tumor suppressor in epithelial ovarian cancer cells. The chain is Ribosomal protein S6 kinase alpha-2 (Rps6ka2) from Mus musculus (Mouse).